The chain runs to 556 residues: TNF receptor-associated factor 6-A (556 aa).

The RING-type; degenerate zinc-finger motif lies at 72–111 (CPICLMALREAVQTPCGHRFCKACILKSLRNAGHKCPVDN). 2 consecutive TRAF-type zinc fingers follow at residues 148-204 (RHLE…EDKS) and 205-261 (GHEL…HNLA). Positions 384–533 (NGVFIWRIKG…NDTLLVRCSV (150 aa)) constitute an MATH domain.

The protein belongs to the TNF receptor-associated factor family. A subfamily. As to quaternary structure, homotrimer. Homooligomer. Interacts with tifa. In terms of tissue distribution, highly expressed in ovary and moderately expressed in kidney, spleen, stomach, colon and testis.

It is found in the cytoplasm. It localises to the cell cortex. Its subcellular location is the nucleus. The protein localises to the lipid droplet. The catalysed reaction is S-ubiquitinyl-[E2 ubiquitin-conjugating enzyme]-L-cysteine + [acceptor protein]-L-lysine = [E2 ubiquitin-conjugating enzyme]-L-cysteine + N(6)-ubiquitinyl-[acceptor protein]-L-lysine.. Its pathway is protein modification; protein ubiquitination. Its function is as follows. E3 ubiquitin ligase that, together with UBE2N and UBE2V1, mediates the synthesis of 'Lys-63'-linked-polyubiquitin chains conjugated to proteins, such as IKBKG, IRAK1, AKT1 and AKT2. Also mediates ubiquitination of free/unanchored polyubiquitin chain that leads to MAP3K7 activation. This Xenopus laevis (African clawed frog) protein is TNF receptor-associated factor 6-A (traf6-a).